Consider the following 158-residue polypeptide: Ribosome maturation factor RimP (158 aa).

It belongs to the RimP family.

Its subcellular location is the cytoplasm. Required for maturation of 30S ribosomal subunits. In Streptococcus uberis (strain ATCC BAA-854 / 0140J), this protein is Ribosome maturation factor RimP.